The chain runs to 205 residues: MPKQIDHEKRRKQIAEATWRVILERGMEGASARNIAKEAGLSLGALRHYFSTQDELLAFAMKLVQEKVTDRIKDIAVRDLLPKEKVLQILLEMVPTNEETIREMEVWFAFTAYARHKKDMFDASHDGIFSGMRNLIAYLDESDLLKQNADKDIEAERLYALVDGLALHAMLDPVRVNKDRIKRVIMQHVESICVEDTRETQKRHP.

The HTH tetR-type domain maps to 8-68; that stretch reads EKRRKQIAEA…FAMKLVQEKV (61 aa). The H-T-H motif DNA-binding region spans 31 to 50; it reads SARNIAKEAGLSLGALRHYF.

In terms of biological role, transcriptional regulation of the polyketide synthase operon. This is HTH-type transcriptional regulator PksA (pksA) from Bacillus subtilis (strain 168).